A 159-amino-acid polypeptide reads, in one-letter code: Keratin-associated protein 9-3 (159 aa).

16 repeat units span residues 8–12 (CCQPT), 13–17 (CCRTT), 32–36 (CCQPS), 37–41 (CCVSS), 46–50 (CCHPT), 51–55 (CCQNT), 56–60 (CCRTT), 61–65 (CCQPI), 70–74 (CCQPS), 75–79 (CCSTP), 80–84 (CCQPT), 85–89 (CCGSS), 129–133 (CCRPA), 134–138 (CCETT), 139–143 (CCRTT), and 153–157 (CCQPS). Positions 8-157 (CCQPTCCRTT…TCVYSCCQPS (150 aa)) are 16 X 5 AA repeats of C-C-[RQVSHE]-[SPTN]-[TASPI].

This sequence belongs to the KRTAP type 9 family. In terms of assembly, interacts with hair keratins.

Functionally, in the hair cortex, hair keratin intermediate filaments are embedded in an interfilamentous matrix, consisting of hair keratin-associated proteins (KRTAP), which are essential for the formation of a rigid and resistant hair shaft through their extensive disulfide bond cross-linking with abundant cysteine residues of hair keratins. The matrix proteins include the high-sulfur and high-glycine-tyrosine keratins. This Homo sapiens (Human) protein is Keratin-associated protein 9-3 (KRTAP9-3).